A 575-amino-acid polypeptide reads, in one-letter code: DNA mismatch repair protein MutL (575 aa).

The protein belongs to the DNA mismatch repair MutL/HexB family.

Functionally, this protein is involved in the repair of mismatches in DNA. It is required for dam-dependent methyl-directed DNA mismatch repair. May act as a 'molecular matchmaker', a protein that promotes the formation of a stable complex between two or more DNA-binding proteins in an ATP-dependent manner without itself being part of a final effector complex. This is DNA mismatch repair protein MutL from Coxiella burnetii (strain CbuG_Q212) (Coxiella burnetii (strain Q212)).